A 96-amino-acid polypeptide reads, in one-letter code: uncharacterized protein (96 aa).

An N-terminal signal peptide occupies residues 1-28 (MNKKAIVGIFMSILMAGLVGCAGSSDAQ).

This is an uncharacterized protein from Butyrivibrio fibrisolvens.